Here is an 81-residue protein sequence, read N- to C-terminus: Gamma-conotoxin-like TeA53 (81 aa).

A signal peptide spans 1–19 (MQKLTILLLVAAVLMSTQA). A propeptide spanning residues 20-42 (LNQEQHQRAKINLLSKRKPPAER) is cleaved from the precursor. Cystine bridges form between cysteine 49/cysteine 63, cysteine 56/cysteine 67, and cysteine 62/cysteine 72.

This sequence belongs to the conotoxin O2 superfamily. In terms of tissue distribution, expressed by the venom duct.

Its subcellular location is the secreted. Gamma-conotoxins may act on voltage-gated non-specific cation pacemaker channels (HCN). This chain is Gamma-conotoxin-like TeA53, found in Conus textile (Cloth-of-gold cone).